Here is a 201-residue protein sequence, read N- to C-terminus: Adenylyl-sulfate kinase (201 aa).

Residue 35-42 (GLSGSGKS) coordinates ATP. Catalysis depends on serine 109, which acts as the Phosphoserine intermediate.

Belongs to the APS kinase family.

It carries out the reaction adenosine 5'-phosphosulfate + ATP = 3'-phosphoadenylyl sulfate + ADP + H(+). The protein operates within sulfur metabolism; hydrogen sulfide biosynthesis; sulfite from sulfate: step 2/3. Its function is as follows. Catalyzes the synthesis of activated sulfate. The protein is Adenylyl-sulfate kinase of Escherichia coli (strain ATCC 8739 / DSM 1576 / NBRC 3972 / NCIMB 8545 / WDCM 00012 / Crooks).